An 827-amino-acid chain; its full sequence is Glycerol-3-phosphate acyltransferase 1, mitochondrial (827 aa).

Topologically, residues 1–87 (MEESSVTVGT…FFNPSIPSLG (87 aa)) are cytoplasmic. The segment at 80 to 120 (NPSIPSLGLRNVIYINETHTRHRGWLARRLSYILFVQERDV) is important for mitochondrial localization. Residues 88–118 (LRNVIYINETHTRHRGWLARRLSYILFVQER) lie within the membrane without spanning it. Residues 119-827 (DVHKGMFATS…LEYILSFVVL (709 aa)) lie on the Cytoplasmic side of the membrane. An HXXXXD motif motif is present at residues 230 to 235 (HRSHID). CoA-binding residues include R278, R279, K288, R293, and R328. The residue at position 380 (S380) is a Phosphoserine. R462 lines the CoA pocket. Phosphoserine occurs at positions 687 and 694. An N6-acetyllysine mark is found at K779 and K783.

This sequence belongs to the GPAT/DAPAT family. Highest levels in liver, intermediate levels in muscle and kidney, and lowest levels in lung and brain.

It localises to the mitochondrion outer membrane. It carries out the reaction sn-glycerol 3-phosphate + an acyl-CoA = a 1-acyl-sn-glycero-3-phosphate + CoA. The catalysed reaction is (9Z,12Z)-octadecadienoyl-CoA + sn-glycerol 3-phosphate = 1-(9Z,12Z)-octadecadienoyl-sn-glycero-3-phosphate + CoA. It catalyses the reaction sn-glycerol 3-phosphate + (9Z)-octadecenoyl-CoA = 1-(9Z-octadecenoyl)-sn-glycero-3-phosphate + CoA. The enzyme catalyses sn-glycerol 3-phosphate + octadecanoyl-CoA = 1-octadecanoyl-sn-glycero-3-phosphate + CoA. It carries out the reaction sn-glycerol 3-phosphate + hexadecanoyl-CoA = 1-hexadecanoyl-sn-glycero-3-phosphate + CoA. The catalysed reaction is dodecanoyl-CoA + sn-glycerol 3-phosphate = 1-dodecanoyl-sn-glycerol 3-phosphate + CoA. It catalyses the reaction 1-acyl-sn-glycero-3-phospho-(1'-sn-glycerol) + an acyl-CoA = a 1,2-diacyl-sn-glycero-3-phospho-(1'-sn-glycerol) + CoA. The protein operates within phospholipid metabolism; CDP-diacylglycerol biosynthesis; CDP-diacylglycerol from sn-glycerol 3-phosphate: step 1/3. Mitochondrial membrane protein that catalyzes the essential first step of biosynthesis of glycerolipids such as triglycerides, phosphatidic acids and lysophosphatidic acids. Esterifies acyl-group from acyl-coenzyme A (acyl-CoA) to the sn-1 position of glycerol-3-phosphate, to produce lysophosphatidic acid. Has a narrow hydrophobic binding cleft that selects for a linear acyl chain. Catalytic activity is higher for substrates with a 16-carbon acyl chain. The sequence is that of Glycerol-3-phosphate acyltransferase 1, mitochondrial from Mus musculus (Mouse).